Reading from the N-terminus, the 439-residue chain is ATP-dependent protease ATPase subunit HslU (439 aa).

ATP is bound by residues isoleucine 17, glycine 59–glutamate 64, aspartate 251, glutamate 317, and arginine 389.

The protein belongs to the ClpX chaperone family. HslU subfamily. In terms of assembly, a double ring-shaped homohexamer of HslV is capped on each side by a ring-shaped HslU homohexamer. The assembly of the HslU/HslV complex is dependent on binding of ATP.

The protein localises to the cytoplasm. Functionally, ATPase subunit of a proteasome-like degradation complex; this subunit has chaperone activity. The binding of ATP and its subsequent hydrolysis by HslU are essential for unfolding of protein substrates subsequently hydrolyzed by HslV. HslU recognizes the N-terminal part of its protein substrates and unfolds these before they are guided to HslV for hydrolysis. The chain is ATP-dependent protease ATPase subunit HslU from Campylobacter jejuni subsp. jejuni serotype O:2 (strain ATCC 700819 / NCTC 11168).